Reading from the N-terminus, the 760-residue chain is Xaa-Pro dipeptidyl-peptidase (760 aa).

Residues S349, D469, and H499 each act as charge relay system in the active site.

The protein belongs to the peptidase S15 family. In terms of assembly, homodimer.

It is found in the cytoplasm. It catalyses the reaction Hydrolyzes Xaa-Pro-|- bonds to release unblocked, N-terminal dipeptides from substrates including Ala-Pro-|-p-nitroanilide and (sequentially) Tyr-Pro-|-Phe-Pro-|-Gly-Pro-|-Ile.. Functionally, removes N-terminal dipeptides sequentially from polypeptides having unsubstituted N-termini provided that the penultimate residue is proline. The sequence is that of Xaa-Pro dipeptidyl-peptidase from Streptococcus pyogenes serotype M12 (strain MGAS9429).